Consider the following 254-residue polypeptide: uncharacterized protein (254 aa).

This is an uncharacterized protein from Aedes vexans (Inland floodwater mosquito).